The primary structure comprises 263 residues: 4-hydroxy-2-oxo-heptane-1,7-dioate aldolase (263 aa).

The active-site Proton acceptor is the histidine 45. Substrate is bound at residue glutamine 147. Residue glutamate 149 coordinates a divalent metal cation. Alanine 174 and aspartate 175 together coordinate substrate. Aspartate 175 serves as a coordination point for a divalent metal cation.

Belongs to the HpcH/HpaI aldolase family. As to quaternary structure, homohexamer; trimer of dimers. A divalent metal cation is required as a cofactor.

It catalyses the reaction 4-hydroxy-2-oxoheptanedioate = succinate semialdehyde + pyruvate. The protein operates within aromatic compound metabolism; 4-hydroxyphenylacetate degradation; pyruvate and succinate semialdehyde from 4-hydroxyphenylacetate: step 7/7. Its function is as follows. Catalyzes the reversible retro-aldol cleavage of 4-hydroxy-2-ketoheptane-1,7-dioate (HKHD) to pyruvate and succinic semialdehyde. This Salmonella dublin (strain CT_02021853) protein is 4-hydroxy-2-oxo-heptane-1,7-dioate aldolase.